The chain runs to 238 residues: U2 small nuclear ribonucleoprotein A' (238 aa).

4 LRR repeats span residues 19-40, 42-63, 64-84, and 89-110; these read KQVT…GITK, TYEV…PRLK, NLKV…DKLP, and HLQS…RILC. The LRRCT domain occupies 123–161; it reads NPITDSPNYRYFIVWLIPTLKVLDFSKVKQKELVKAKEL.

It belongs to the U2 small nuclear ribonucleoprotein A family. Associated with the spliceosome.

The protein localises to the nucleus. Functionally, involved in pre-mRNA splicing. This Debaryomyces hansenii (strain ATCC 36239 / CBS 767 / BCRC 21394 / JCM 1990 / NBRC 0083 / IGC 2968) (Yeast) protein is U2 small nuclear ribonucleoprotein A' (LEA1).